A 469-amino-acid chain; its full sequence is Glutamate--tRNA ligase 2 (469 aa).

The short motif at 8-18 is the 'HIGH' region element; sequence PSPTGFLHVGG. Residues 250-254 carry the 'KMSKS' region motif; sequence KLSKR. K253 lines the ATP pocket.

Belongs to the class-I aminoacyl-tRNA synthetase family. Glutamate--tRNA ligase type 1 subfamily. Monomer.

Its subcellular location is the cytoplasm. It carries out the reaction tRNA(Glu) + L-glutamate + ATP = L-glutamyl-tRNA(Glu) + AMP + diphosphate. Its function is as follows. Catalyzes the attachment of glutamate to tRNA(Glu) in a two-step reaction: glutamate is first activated by ATP to form Glu-AMP and then transferred to the acceptor end of tRNA(Glu). The protein is Glutamate--tRNA ligase 2 of Thermotoga sp. (strain RQ2).